A 212-amino-acid polypeptide reads, in one-letter code: MAITQESKQIQVLRFIHEAQSENGYPPTVREIGEAVGLSSSSTIHGHIERLVKKGYLLKDASKPRARAIEVTDIGLEMLGISTTPGKIPVLGMVTAGTPILAVEEEATEFFPIPDNLMQFDGDLFMLNVHGDSMVNIGILDGDKVIVRKQENADNGDVVVAMNDNNEATVKRFFREADHYRLQPENNSMAPIILQKVSILGKVIGLYRDAIY.

The H-T-H motif DNA-binding region spans 29 to 49; the sequence is VREIGEAVGLSSSSTIHGHIE. Active-site for autocatalytic cleavage activity residues include serine 133 and lysine 171.

This sequence belongs to the peptidase S24 family. As to quaternary structure, homodimer.

The catalysed reaction is Hydrolysis of Ala-|-Gly bond in repressor LexA.. Functionally, represses a number of genes involved in the response to DNA damage (SOS response), including recA and lexA. In the presence of single-stranded DNA, RecA interacts with LexA causing an autocatalytic cleavage which disrupts the DNA-binding part of LexA, leading to derepression of the SOS regulon and eventually DNA repair. This Leuconostoc mesenteroides subsp. mesenteroides (strain ATCC 8293 / DSM 20343 / BCRC 11652 / CCM 1803 / JCM 6124 / NCDO 523 / NBRC 100496 / NCIMB 8023 / NCTC 12954 / NRRL B-1118 / 37Y) protein is LexA repressor.